The primary structure comprises 146 residues: Hemoglobin subunit beta (146 aa).

Residue valine 1 is modified to N-acetylvaline. Positions 2 to 146 (HLSDGEKNAI…VANALAHKYH (145 aa)) constitute a Globin domain. Serine 44 is modified (phosphoserine). Lysine 59 is subject to N6-acetyllysine. Histidine 63 is a heme b binding site. Lysine 82 bears the N6-acetyllysine mark. Histidine 92 contacts heme b. S-nitrosocysteine is present on cysteine 93. Lysine 144 carries the N6-acetyllysine modification.

It belongs to the globin family. In terms of assembly, heterotetramer of two alpha chains and two beta chains. Red blood cells.

Functionally, involved in oxygen transport from the lung to the various peripheral tissues. The sequence is that of Hemoglobin subunit beta (HBB) from Spermophilus citellus (European ground squirrel).